A 221-amino-acid polypeptide reads, in one-letter code: MAEFDARDLLDCYARGVFPMADAREDARVFLIDPERRGVIPLEAFHVPRRLARTVRGDPFEIRIDAAFHDVVLACAASGPGRTETWINRPIEQLYLELHELGFAHSVECWQGERLVGGLYGVSLQGAFFGESMFSRVRDASKVALVHLVARLIAGGFTLLDAQFMTEHLAQFGAREIPRREYHRRLDRALAAPADFYALGAAAPSADGAGRLALQLITQAS.

Belongs to the L/F-transferase family.

The protein resides in the cytoplasm. It carries out the reaction N-terminal L-lysyl-[protein] + L-leucyl-tRNA(Leu) = N-terminal L-leucyl-L-lysyl-[protein] + tRNA(Leu) + H(+). The enzyme catalyses N-terminal L-arginyl-[protein] + L-leucyl-tRNA(Leu) = N-terminal L-leucyl-L-arginyl-[protein] + tRNA(Leu) + H(+). It catalyses the reaction L-phenylalanyl-tRNA(Phe) + an N-terminal L-alpha-aminoacyl-[protein] = an N-terminal L-phenylalanyl-L-alpha-aminoacyl-[protein] + tRNA(Phe). Functionally, functions in the N-end rule pathway of protein degradation where it conjugates Leu, Phe and, less efficiently, Met from aminoacyl-tRNAs to the N-termini of proteins containing an N-terminal arginine or lysine. This is Leucyl/phenylalanyl-tRNA--protein transferase from Phenylobacterium zucineum (strain HLK1).